Reading from the N-terminus, the 208-residue chain is EF-hand protein 5 variant 1 (208 aa).

Residues 1 to 34 are disordered; that stretch reads MQARGTVKVQGDAKVDGKMSTGQHSHHQHLNSTQ. EF-hand domains lie at 64–98, 99–134, 135–170, and 171–206; these read MAEGFYVLSGGYKKLFIPSKDVYALMQNVGMHLTE, EEFHDALRVIGQSEPQNADELSFSDFLLLMTREVDD, TMADELRSAFFHYDKYKTGYVTRKQFTELFATLGER, and STPEELEELLAVAEVDETDDKIDYNRFVNELTSRVN. Residues Glu118, Asp123, Asp148, Thr152, and Tyr154 each contribute to the Ca(2+) site.

In Trypanosoma cruzi, this protein is EF-hand protein 5 variant 1.